The following is a 37-amino-acid chain: Large ribosomal subunit protein bL36 (37 aa).

This sequence belongs to the bacterial ribosomal protein bL36 family.

In Variovorax paradoxus (strain S110), this protein is Large ribosomal subunit protein bL36.